Here is an 802-residue protein sequence, read N- to C-terminus: Outer membrane usher protein PefC (802 aa).

The first 24 residues, 1 to 24 (MSFHHRVFKLSALSLALFSHLSFA), serve as a signal peptide directing secretion. Cys782 and Cys801 are oxidised to a cystine.

This sequence belongs to the fimbrial export usher family.

It is found in the cell outer membrane. Its function is as follows. Involved in the export and assembly of FimA fimbrial subunits across the outer membrane. This Salmonella typhimurium (strain LT2 / SGSC1412 / ATCC 700720) protein is Outer membrane usher protein PefC (pefC).